We begin with the raw amino-acid sequence, 471 residues long: Uronate isomerase (471 aa).

Belongs to the metallo-dependent hydrolases superfamily. Uronate isomerase family.

It catalyses the reaction D-glucuronate = D-fructuronate. It carries out the reaction aldehydo-D-galacturonate = keto-D-tagaturonate. It participates in carbohydrate metabolism; pentose and glucuronate interconversion. The polypeptide is Uronate isomerase (Cellvibrio japonicus (strain Ueda107) (Pseudomonas fluorescens subsp. cellulosa)).